A 1050-amino-acid chain; its full sequence is Self-sufficient cytochrome P450 monooxygenase CYP505E5 (1050 aa).

Residue cysteine 405 participates in heme binding. The interval arginine 467–aspartate 491 is disordered. The Flavodoxin-like domain maps to valine 500–leucine 641. Residues serine 506–threonine 510 and valine 585–alanine 617 each bind FMN. Residues lysine 679–proline 907 enclose the FAD-binding FR-type domain.

It in the N-terminal section; belongs to the cytochrome P450 family. FAD is required as a cofactor. It depends on FMN as a cofactor. Heme serves as cofactor.

It catalyses the reaction 2 oxidized [cytochrome P450] + NADPH = 2 reduced [cytochrome P450] + NADP(+) + H(+). The catalysed reaction is an organic molecule + reduced [NADPH--hemoprotein reductase] + O2 = an alcohol + oxidized [NADPH--hemoprotein reductase] + H2O + H(+). It carries out the reaction dodecanoate + reduced [NADPH--hemoprotein reductase] + O2 = 5-hydroxydodecanoate + oxidized [NADPH--hemoprotein reductase] + H2O + H(+). The enzyme catalyses tetradecanoate + reduced [NADPH--hemoprotein reductase] + O2 = 7-hydroxytetradecanoate + oxidized [NADPH--hemoprotein reductase] + H2O + H(+). It catalyses the reaction dodecan-1-ol + reduced [NADPH--hemoprotein reductase] + O2 = 1,5-dodecanediol + oxidized [NADPH--hemoprotein reductase] + H2O + H(+). The catalysed reaction is dodecan-1-ol + reduced [NADPH--hemoprotein reductase] + O2 = 1,4-dodecanediol + oxidized [NADPH--hemoprotein reductase] + H2O + H(+). It carries out the reaction dodecan-1-ol + reduced [NADPH--hemoprotein reductase] + O2 = 1,6-dodecanediol + oxidized [NADPH--hemoprotein reductase] + H2O + H(+). Functionally, self-sufficient cytochrome P450 monooxygenase that catalyzes the regioselective in-chain hydroxylation of alkanes, fatty alcohols, and fatty acids at the omega-7 position. Performs hydroxylation of C10-C16 n-alkanes and C12 and C14 fatty alcohols; and thereby enables the one step biocatalytic synthesis of rare alcohols such as 5-dodecanol and 7-tetradecanol. Converts 1-dodecanol into 1,5-dodecanediol as major product with very little sub-terminally hydroxylated products with the 1,4-dodecanediol and 1,6-dodecanediol more abundant. Converts dodecanoic acid to 5-hydroxydodecanoic acid which can be further converted into delta-dodecalactone by lactonization of the 5-hydroxy acid at low pH. Also gives sub-terminal hydroxylation of dodecanoic acid with 9-hydroxydodecanoic acid being the second most abundant product. The sequence is that of Self-sufficient cytochrome P450 monooxygenase CYP505E5 from Aspergillus niger.